Consider the following 359-residue polypeptide: Peptide chain release factor 1 (359 aa).

Glutamine 236 carries the N5-methylglutamine modification.

Belongs to the prokaryotic/mitochondrial release factor family. Methylated by PrmC. Methylation increases the termination efficiency of RF1.

Its subcellular location is the cytoplasm. Peptide chain release factor 1 directs the termination of translation in response to the peptide chain termination codons UAG and UAA. This Streptococcus pyogenes serotype M12 (strain MGAS2096) protein is Peptide chain release factor 1.